A 476-amino-acid chain; its full sequence is Probable secreted beta-glucosidase SIM1 (476 aa).

The first 19 residues, 1–19 (MKFSTAVTTLISSGAIVSA), serve as a signal peptide directing secretion. The span at 111–203 (ATASTSQGAS…SSSSSSSGSG (93 aa)) shows a compositional bias: low complexity. A disordered region spans residues 111–214 (ATASTSQGAS…IYGDLADFSG (104 aa)). Residue Asn-423 is glycosylated (N-linked (GlcNAc...) asparagine).

It belongs to the SUN family.

It localises to the secreted. The protein localises to the cell wall. Its function is as follows. Involved in the remodeling of the cell wall during the various phases of yeast culture development and under various environmental conditions. Required for the maintenance of the CLB5 kinase activity. This is Probable secreted beta-glucosidase SIM1 (SIM1) from Saccharomyces cerevisiae (strain ATCC 204508 / S288c) (Baker's yeast).